The primary structure comprises 1165 residues: Disease resistance protein RPS4B (1165 aa).

One can recognise a TIR domain in the interval Pro-12–Leu-174. Glu-86 is a catalytic residue. The region spanning Lys-211–Gln-474 is the NB-ARC domain. Residues Ser-592 to Pro-613 form an LRR 1 repeat. One copy of the LRR 2; degenerate repeat lies at Leu-614–Asp-635. 6 LRR repeats span residues Pro-636–Thr-659, Asn-684–Asn-703, Leu-704–Pro-725, Glu-726–Leu-748, Leu-772–Lys-794, and Ser-795–Tyr-818. One copy of the LRR 9; degenerate repeat lies at Leu-819–Gln-836. The LRR 10 repeat unit spans residues Val-837–Tyr-863.

This sequence belongs to the disease resistance TIR-NB-LRR family. As to quaternary structure, interacts with RRS1B. RPS4B-RRS1B heterodimer interacts with the bacterial effectors AvrRps4 and PopP2.

It is found in the nucleus. The enzyme catalyses NAD(+) + H2O = ADP-D-ribose + nicotinamide + H(+). Its function is as follows. Disease resistance (R) protein that specifically recognizes the AvrRps4 type III effector avirulence protein from P.syringae. Heterodimerization with RRS1B is required to form a functional complex to recognize AvrRps4 and to mediate the hypersensitive response. The polypeptide is Disease resistance protein RPS4B (Arabidopsis thaliana (Mouse-ear cress)).